Consider the following 118-residue polypeptide: Ribonuclease P protein component (118 aa).

The protein belongs to the RnpA family. In terms of assembly, consists of a catalytic RNA component (M1 or rnpB) and a protein subunit.

It carries out the reaction Endonucleolytic cleavage of RNA, removing 5'-extranucleotides from tRNA precursor.. Its function is as follows. RNaseP catalyzes the removal of the 5'-leader sequence from pre-tRNA to produce the mature 5'-terminus. It can also cleave other RNA substrates such as 4.5S RNA. The protein component plays an auxiliary but essential role in vivo by binding to the 5'-leader sequence and broadening the substrate specificity of the ribozyme. The protein is Ribonuclease P protein component of Mycoplasma pneumoniae (strain ATCC 29342 / M129 / Subtype 1) (Mycoplasmoides pneumoniae).